The sequence spans 142 residues: Large ribosomal subunit protein bL17 (142 aa).

It belongs to the bacterial ribosomal protein bL17 family. Part of the 50S ribosomal subunit. Contacts protein L32.

This is Large ribosomal subunit protein bL17 from Wolbachia pipientis wMel.